The primary structure comprises 323 residues: Tetraacyldisaccharide 4'-kinase (323 aa).

56-63 (TVGGVGKT) is a binding site for ATP.

The protein belongs to the LpxK family.

The catalysed reaction is a lipid A disaccharide + ATP = a lipid IVA + ADP + H(+). It functions in the pathway glycolipid biosynthesis; lipid IV(A) biosynthesis; lipid IV(A) from (3R)-3-hydroxytetradecanoyl-[acyl-carrier-protein] and UDP-N-acetyl-alpha-D-glucosamine: step 6/6. Its function is as follows. Transfers the gamma-phosphate of ATP to the 4'-position of a tetraacyldisaccharide 1-phosphate intermediate (termed DS-1-P) to form tetraacyldisaccharide 1,4'-bis-phosphate (lipid IVA). The sequence is that of Tetraacyldisaccharide 4'-kinase from Legionella pneumophila (strain Corby).